We begin with the raw amino-acid sequence, 177 residues long: Large ribosomal subunit protein uL6 (177 aa).

The protein belongs to the universal ribosomal protein uL6 family. Part of the 50S ribosomal subunit.

Its function is as follows. This protein binds to the 23S rRNA, and is important in its secondary structure. It is located near the subunit interface in the base of the L7/L12 stalk, and near the tRNA binding site of the peptidyltransferase center. The polypeptide is Large ribosomal subunit protein uL6 (Paracidovorax citrulli (strain AAC00-1) (Acidovorax citrulli)).